Here is a 235-residue protein sequence, read N- to C-terminus: Elongation factor Tu (235 aa).

A tr-type G domain is found at 1–125 (KNMITGAAQM…QVDEYIPAPE (125 aa)). 47-50 (NKQD) is a GTP binding site.

This sequence belongs to the TRAFAC class translation factor GTPase superfamily. Classic translation factor GTPase family. EF-Tu/EF-1A subfamily. As to quaternary structure, monomer.

It localises to the cytoplasm. It catalyses the reaction GTP + H2O = GDP + phosphate + H(+). In terms of biological role, GTP hydrolase that promotes the GTP-dependent binding of aminoacyl-tRNA to the A-site of ribosomes during protein biosynthesis. In Leptolyngbya ectocarpi (Phormidium ectocarpi), this protein is Elongation factor Tu (tufA).